Here is a 162-residue protein sequence, read N- to C-terminus: Interleukin-15 (162 aa).

The signal sequence occupies residues 1 to 29 (MRISKPSLRSTSIQCYLCFLLNSHLITEA). The propeptide occupies 30-48 (GIHVFVWGCISAGLPKTEA). Intrachain disulfides connect C83-C133 and C90-C136. Residues N119 and N127 are each glycosylated (N-linked (GlcNAc...) asparagine).

Belongs to the IL-15/IL-21 family.

It is found in the secreted. Cytokine that plays a major role in the development of inflammatory and protective immune responses to microbial invaders and parasites by modulating immune cells of both the innate and adaptive immune systems. Stimulates the proliferation of natural killer cells, T-cells and B-cells and promotes the secretion of several cytokines. In monocytes, induces the production of IL8 and monocyte chemotactic protein 1/CCL2, two chemokines that attract neutrophils and monocytes respectively to sites of infection. Unlike most cytokines, which are secreted in soluble form, IL15 is expressed in association with its high affinity IL15RA on the surface of IL15-producing cells and delivers signals to target cells that express IL2RB and IL2RG receptor subunits. Binding to its receptor triggers the phosphorylation of JAK1 and JAK3 and the recruitment and subsequent phosphorylation of signal transducer and activator of transcription-3/STAT3 and STAT5. In mast cells, induces the rapid tyrosine phosphorylation of STAT6 and thereby controls mast cell survival and release of cytokines such as IL4. This chain is Interleukin-15 (IL15), found in Cavia porcellus (Guinea pig).